The following is a 614-amino-acid chain: Male-specific lethal 1 homolog (614 aa).

Disordered regions lie at residues 1–127 (MTMR…GCSP) and 147–217 (KEPT…GASS). Phosphoserine occurs at positions 66 and 126. Residues 158-169 (GAASPAATASDP) are compositionally biased toward low complexity. The segment covering 170–184 (AGPPPLPLPGPPPLA) has biased composition (pro residues). Residues 185–194 (PTATAGTLAA) are compositionally biased toward low complexity. S205 is subject to Phosphoserine. Positions 213-282 (SGASSQAACL…KDNEKERHKL (70 aa)) form a coiled coil. The tract at residues 223–237 (KQILLLQLDLIEQQQ) is interaction with MSL2. 2 stretches are compositionally biased toward basic and acidic residues: residues 272–281 (KKDNEKERHK) and 294–304 (TELSEKIKLEC). A disordered region spans residues 272–420 (KKDNEKERHK…PKEKAFSSEI (149 aa)). K301 participates in a covalent cross-link: Glycyl lysine isopeptide (Lys-Gly) (interchain with G-Cter in SUMO2). Residues 317–346 (PKPFSCGRSGKGHKRKSPFGSTERKTPVKK) carry the Nuclear localization signal motif. An N6-acetyllysine modification is found at K353. Residues K365 and K378 each participate in a glycyl lysine isopeptide (Lys-Gly) (interchain with G-Cter in SUMO2) cross-link. Over residues 376–392 (VCKRELRSQETPEKPRS) the composition is skewed to basic and acidic residues. S393 is subject to Phosphoserine. Positions 393–407 (SVDTPPRLSTPQKGP) are enriched in polar residues. The residue at position 396 (T396) is a Phosphothreonine. Phosphoserine is present on S442. In terms of domain architecture, PEHE spans 472–591 (VLAVPSWRDH…LTPQNFELPW (120 aa)). The interaction with KAT8 HAT domain stretch occupies residues 496-514 (ENLDDSVFSKRHAKLELDE). Residues 505–519 (KRHAKLELDEKRRKR) carry the Bipartite nuclear localization signal motif. The tract at residues 550–591 (EVTSFFPEPDDVESLMITPFLPVVAFGRPLPKLTPQNFELPW) is sufficient for interaction with MSL3 MRG domain.

Belongs to the msl-1 family. As to quaternary structure, component of a multisubunit histone acetyltransferase complex (MSL) at least composed of the KAT8/MOF/MYST1, MSL1/hampin, MSL2 and MSL3. Forms a MSL heterotetrameric core with MSL2. Interacts (via PEHE domain) with KAT8 (via HAT domain) and MSL3 (via MRG domain); both interactions are direct. Directly interacts with NUPR1. Interacts with TP53BP1; this interaction may be required for MSL1 DNA repair activity, but not for histone acetyltransferase activity. Interacts with TTC4, ECM2 and PIHD1. Post-translationally, sumoylated with SUMO1.

The protein resides in the nucleus. It is found in the nucleoplasm. It localises to the nucleus speckle. Its function is as follows. Non-catalytic component of the MSL histone acetyltransferase complex, a multiprotein complex that mediates the majority of histone H4 acetylation at 'Lys-16' (H4K16ac), an epigenetic mark that prevents chromatin compaction. The MSL complex is required for chromosome stability and genome integrity by maintaining homeostatic levels of H4K16ac. The MSL complex is also involved in gene dosage by promoting up-regulation of genes expressed by the X chromosome. X up-regulation is required to compensate for autosomal biallelic expression. The MSL complex also participates in gene dosage compensation by promoting expression of Tsix non-coding RNA. Within the MSL complex, acts as a scaffold to tether MSL3 and KAT8 together for enzymatic activity regulation. Greatly enhances MSL2 E3 ubiquitin ligase activity, promoting monoubiquitination of histone H2B at 'Lys-34' (H2BK34Ub). This modification in turn stimulates histone H3 methylation at 'Lys-4' (H3K4me) and 'Lys-79' (H3K79me) and leads to gene activation, including that of HOXA9 and MEIS1. The chain is Male-specific lethal 1 homolog from Homo sapiens (Human).